Consider the following 40-residue polypeptide: Chitin-binding protein 4 (40 aa).

N-glycosylated.

Its function is as follows. Chitin-binding protein. Has antifungal activity against C.krusei, C.albicans, C.tropicalis and C.parapsilosis. Has antinociceptive and anti-inflammatory activity in mice. This is Chitin-binding protein 4 from Moringa oleifera (Horseradish tree).